The following is a 350-amino-acid chain: Protein CONSERVED ONLY IN THE GREEN LINEAGE 160, chloroplastic (350 aa).

Residues 1 to 46 (MAILSYISATSTTPPIPQDQSPNSRLPTKIILPNKKPEKWSTGVAP) constitute a chloroplast transit peptide. A compositionally biased stretch (polar residues) spans 7–26 (ISATSTTPPIPQDQSPNSRL). Positions 7 to 58 (ISATSTTPPIPQDQSPNSRLPTKIILPNKKPEKWSTGVAPGEYGGPPTTTKL) are disordered. S117 is subject to Phosphoserine. 4 helical membrane passes run 213-233 (KNKI…SAYI), 239-259 (IALS…MLGN), 276-296 (ANQP…RWNA), and 304-324 (FMHL…IATF).

The protein localises to the plastid. It is found in the chloroplast thylakoid membrane. Functionally, facilitates the assembly of the membrane proton channel of the chloroplastic F-type ATPase. Specifically required for the efficient assembly and integration of the CF(0) subunit c into the chloroplastic ATPase complex in the thylakoid membrane. In Arabidopsis thaliana (Mouse-ear cress), this protein is Protein CONSERVED ONLY IN THE GREEN LINEAGE 160, chloroplastic.